A 917-amino-acid polypeptide reads, in one-letter code: Auxin response factor 17 (917 aa).

Residues 134–236 (FCKTLTASDT…QLLLGIRRAN (103 aa)) constitute a DNA-binding region (TF-B3). The disordered stretch occupies residues 571–649 (SVPNALSPFS…RPTAVPVPDP (79 aa)). Low complexity-rich tracts occupy residues 576–594 (LSPF…MTLQ) and 604–620 (SYPD…NTST). The 85-residue stretch at 786-870 (ATFVKVYKSG…SCIKILSPQE (85 aa)) folds into the PB1 domain.

The protein belongs to the ARF family. In terms of assembly, homodimers and heterodimers. Expressed in roots, culms, leaves and young panicles.

Its subcellular location is the nucleus. In terms of biological role, auxin response factors (ARFs) are transcriptional factors that bind specifically to the DNA sequence 5'-TGTCTC-3' found in the auxin-responsive promoter elements (AuxREs). This Oryza sativa subsp. japonica (Rice) protein is Auxin response factor 17 (ARF17).